The chain runs to 374 residues: Chaperone protein DnaJ (374 aa).

The region spanning 4–69 (DFYETLCVSR…QKRAAYDRFG (66 aa)) is the J domain. A CR-type zinc finger spans residues 131-210 (GKTAQIRVPT…CSGQGRLTEE (80 aa)). Zn(2+) contacts are provided by cysteine 144, cysteine 147, cysteine 161, cysteine 164, cysteine 184, cysteine 187, cysteine 198, and cysteine 201. CXXCXGXG motif repeat units follow at residues 144-151 (CDECAGSG), 161-168 (CPMCHGAG), 184-191 (CPQCQGRG), and 198-205 (CRKCSGQG).

The protein belongs to the DnaJ family. In terms of assembly, homodimer. The cofactor is Zn(2+).

The protein resides in the cytoplasm. Functionally, participates actively in the response to hyperosmotic and heat shock by preventing the aggregation of stress-denatured proteins and by disaggregating proteins, also in an autonomous, DnaK-independent fashion. Unfolded proteins bind initially to DnaJ; upon interaction with the DnaJ-bound protein, DnaK hydrolyzes its bound ATP, resulting in the formation of a stable complex. GrpE releases ADP from DnaK; ATP binding to DnaK triggers the release of the substrate protein, thus completing the reaction cycle. Several rounds of ATP-dependent interactions between DnaJ, DnaK and GrpE are required for fully efficient folding. Also involved, together with DnaK and GrpE, in the DNA replication of plasmids through activation of initiation proteins. This Chelativorans sp. (strain BNC1) protein is Chaperone protein DnaJ.